Consider the following 889-residue polypeptide: Inter-alpha-trypsin inhibitor heavy chain H3 (889 aa).

Residues 1–21 form the signal peptide; the sequence is MRTMWWPCLVLALLSGLETSG. Positions 22-33 are excised as a propeptide; that stretch reads FPRSPLQLLGKR. The 130-residue stretch at 29-158 folds into the VIT domain; sequence LLGKRSLPEG…KVTFELTYEE (130 aa). The N-linked (GlcNAc...) asparagine glycan is linked to Asn91. In terms of domain architecture, VWFA spans 284 to 467; that stretch reads NIVFVIDVSG…LQLQGFYEEV (184 aa). An N-linked (GlcNAc...) asparagine glycan is attached at Asn580. Asp649 carries the aspartate 1-(chondroitin 4-sulfate)-ester modification. The propeptide occupies 650-889; sequence PHFIIQIPGK…HTDYIVPSLF (240 aa).

The protein belongs to the ITIH family. In terms of assembly, I-alpha-I plasma protease inhibitors are assembled from one or two heavy chains (HC) and one light chain, bikunin. Pre-alpha-inhibitor (P-alpha-I) is composed of ITIH3/HC3 and bikunin. Post-translationally, heavy chains are linked to bikunin via chondroitin 4-sulfate esterified to the alpha-carboxyl of the C-terminal aspartate after propeptide cleavage. In terms of tissue distribution, expressed in both liver and brain.

Its subcellular location is the secreted. Its function is as follows. May act as a carrier of hyaluronan in serum or as a binding protein between hyaluronan and other matrix protein, including those on cell surfaces in tissues to regulate the localization, synthesis and degradation of hyaluronan which are essential to cells undergoing biological processes. This is Inter-alpha-trypsin inhibitor heavy chain H3 (Itih3) from Mus musculus (Mouse).